Consider the following 159-residue polypeptide: 2-C-methyl-D-erythritol 2,4-cyclodiphosphate synthase (159 aa).

2 residues coordinate a divalent metal cation: aspartate 10 and histidine 12. 4-CDP-2-C-methyl-D-erythritol 2-phosphate contacts are provided by residues 10 to 12 (DVH) and 37 to 38 (HS). Histidine 45 lines the a divalent metal cation pocket. 4-CDP-2-C-methyl-D-erythritol 2-phosphate is bound by residues 59-61 (DIG), 64-68 (FLDTD), 103-109 (AQAPKML), 135-138 (TTTE), phenylalanine 142, and arginine 145.

It belongs to the IspF family. In terms of assembly, homotrimer. A divalent metal cation is required as a cofactor.

The catalysed reaction is 4-CDP-2-C-methyl-D-erythritol 2-phosphate = 2-C-methyl-D-erythritol 2,4-cyclic diphosphate + CMP. It functions in the pathway isoprenoid biosynthesis; isopentenyl diphosphate biosynthesis via DXP pathway; isopentenyl diphosphate from 1-deoxy-D-xylulose 5-phosphate: step 4/6. Involved in the biosynthesis of isopentenyl diphosphate (IPP) and dimethylallyl diphosphate (DMAPP), two major building blocks of isoprenoid compounds. Catalyzes the conversion of 4-diphosphocytidyl-2-C-methyl-D-erythritol 2-phosphate (CDP-ME2P) to 2-C-methyl-D-erythritol 2,4-cyclodiphosphate (ME-CPP) with a corresponding release of cytidine 5-monophosphate (CMP). This is 2-C-methyl-D-erythritol 2,4-cyclodiphosphate synthase from Francisella tularensis subsp. tularensis (strain FSC 198).